The primary structure comprises 379 residues: Flagellar P-ring protein (379 aa).

The signal sequence occupies residues M1–A32.

It belongs to the FlgI family. The basal body constitutes a major portion of the flagellar organelle and consists of four rings (L,P,S, and M) mounted on a central rod.

The protein localises to the periplasm. Its subcellular location is the bacterial flagellum basal body. Its function is as follows. Assembles around the rod to form the L-ring and probably protects the motor/basal body from shearing forces during rotation. The polypeptide is Flagellar P-ring protein (Rhodospirillum rubrum (strain ATCC 11170 / ATH 1.1.1 / DSM 467 / LMG 4362 / NCIMB 8255 / S1)).